We begin with the raw amino-acid sequence, 1040 residues long: Contactin-2 (1040 aa).

The N-terminal stretch at methionine 1–glycine 30 is a signal peptide. Ig-like C2-type domains are found at residues proline 43 to arginine 128, glutamine 133 to serine 222, proline 239 to isoleucine 322, proline 327 to alanine 411, proline 417 to serine 504, and threonine 509 to leucine 603. 4 cysteine pairs are disulfide-bonded: cysteine 61-cysteine 111, cysteine 155-cysteine 207, cysteine 261-cysteine 306, and cysteine 348-cysteine 395. N-linked (GlcNAc...) asparagine glycosylation is found at asparagine 76, asparagine 198, and asparagine 204. N-linked (GlcNAc...) asparagine glycosylation is found at asparagine 461, asparagine 477, asparagine 498, and asparagine 525. Fibronectin type-III domains are found at residues proline 610–alanine 708, alanine 713–glutamate 810, alanine 815–proline 910, and proline 915–threonine 1006. A disordered region spans residues glycine 694–glycine 720. The Cell attachment site motif lies at arginine 794–aspartate 796. Asparagine 830, asparagine 904, asparagine 918, and asparagine 940 each carry an N-linked (GlcNAc...) asparagine glycan. Residues alanine 894–isoleucine 919 are disordered. Asparagine 1012 carries GPI-anchor amidated asparagine lipidation. Positions methionine 1013–leucine 1040 are cleaved as a propeptide — removed in mature form.

Belongs to the immunoglobulin superfamily. Contactin family.

The protein localises to the cell membrane. In terms of biological role, in conjunction with another transmembrane protein, CNTNAP2, contributes to the organization of axonal domains at nodes of Ranvier by maintaining voltage-gated potassium channels at the juxtaparanodal region. May be involved in cell adhesion. The polypeptide is Contactin-2 (CNTN2) (Homo sapiens (Human)).